A 551-amino-acid chain; its full sequence is Membrane protein insertase YidC (551 aa).

The helical transmembrane segment at 3–23 (ANHIRILLLVTIAIMFISLMG) threads the bilayer. A disordered region spans residues 33 to 55 (NTKQQTSATQNNSHYDNADSSTN). The next 3 membrane-spanning stretches (helical) occupy residues 361–381 (LVGNWGLAIILVTCLIKLIFY), 431–451 (LSGCLPMLIQIPIFISLYWVL), and 504–524 (VMMFLPVIFTFLFASFPSGLV).

The protein belongs to the OXA1/ALB3/YidC family. Type 1 subfamily. In terms of assembly, interacts with the Sec translocase complex via SecD. Specifically interacts with transmembrane segments of nascent integral membrane proteins during membrane integration.

Its subcellular location is the cell inner membrane. In terms of biological role, required for the insertion and/or proper folding and/or complex formation of integral membrane proteins into the membrane. Involved in integration of membrane proteins that insert both dependently and independently of the Sec translocase complex, as well as at least some lipoproteins. Aids folding of multispanning membrane proteins. The sequence is that of Membrane protein insertase YidC from Francisella tularensis subsp. holarctica (strain OSU18).